Here is a 252-residue protein sequence, read N- to C-terminus: Imidazole glycerol phosphate synthase subunit HisF (252 aa).

Residues D11 and D130 contribute to the active site.

Belongs to the HisA/HisF family. As to quaternary structure, heterodimer of HisH and HisF.

The protein localises to the cytoplasm. The enzyme catalyses 5-[(5-phospho-1-deoxy-D-ribulos-1-ylimino)methylamino]-1-(5-phospho-beta-D-ribosyl)imidazole-4-carboxamide + L-glutamine = D-erythro-1-(imidazol-4-yl)glycerol 3-phosphate + 5-amino-1-(5-phospho-beta-D-ribosyl)imidazole-4-carboxamide + L-glutamate + H(+). Its pathway is amino-acid biosynthesis; L-histidine biosynthesis; L-histidine from 5-phospho-alpha-D-ribose 1-diphosphate: step 5/9. IGPS catalyzes the conversion of PRFAR and glutamine to IGP, AICAR and glutamate. The HisF subunit catalyzes the cyclization activity that produces IGP and AICAR from PRFAR using the ammonia provided by the HisH subunit. The sequence is that of Imidazole glycerol phosphate synthase subunit HisF from Lacticaseibacillus paracasei (strain ATCC 334 / BCRC 17002 / CCUG 31169 / CIP 107868 / KCTC 3260 / NRRL B-441) (Lactobacillus paracasei).